The chain runs to 289 residues: 3-methyl-2-oxobutanoate hydroxymethyltransferase (289 aa).

Positions 50 and 89 each coordinate Mg(2+). Residues 50 to 51 (DS), D89, and K119 each bind 3-methyl-2-oxobutanoate. Mg(2+) is bound at residue E121. The Proton acceptor role is filled by E188. Residues 266–289 (AQHSFGMPEDEQRRWEENVSGADD) are disordered.

Belongs to the PanB family. In terms of assembly, homodecamer; pentamer of dimers. It depends on Mg(2+) as a cofactor.

The protein resides in the cytoplasm. It catalyses the reaction 3-methyl-2-oxobutanoate + (6R)-5,10-methylene-5,6,7,8-tetrahydrofolate + H2O = 2-dehydropantoate + (6S)-5,6,7,8-tetrahydrofolate. It functions in the pathway cofactor biosynthesis; (R)-pantothenate biosynthesis; (R)-pantoate from 3-methyl-2-oxobutanoate: step 1/2. Catalyzes the reversible reaction in which hydroxymethyl group from 5,10-methylenetetrahydrofolate is transferred onto alpha-ketoisovalerate to form ketopantoate. This is 3-methyl-2-oxobutanoate hydroxymethyltransferase from Oleidesulfovibrio alaskensis (strain ATCC BAA-1058 / DSM 17464 / G20) (Desulfovibrio alaskensis).